Reading from the N-terminus, the 253-residue chain is Kallikrein-7 (253 aa).

An N-terminal signal peptide occupies residues methionine 1–glycine 22. Positions glutamate 23 to lysine 29 are cleaved as a propeptide — activation peptide. Positions isoleucine 30–lysine 250 constitute a Peptidase S1 domain. Disulfide bonds link cysteine 36–cysteine 165, cysteine 55–cysteine 71, cysteine 137–cysteine 239, cysteine 144–cysteine 211, cysteine 176–cysteine 190, and cysteine 201–cysteine 226. Active-site charge relay system residues include histidine 70 and aspartate 112. Catalysis depends on serine 205, which acts as the Charge relay system. The N-linked (GlcNAc...) asparagine glycan is linked to asparagine 246.

The protein belongs to the peptidase S1 family. Kallikrein subfamily. Abundantly expressed in the skin and is expressed by keratinocytes in the epidermis. Also expressed in the brain, mammary gland, cerebellum, spinal cord and kidney. Lower levels in salivary glands, uterus, thymus, thyroid, placenta, trachea and testis. Up-regulated in ovarian carcinoma, especially late-stage serous carcinoma, compared with normal ovaries and benign adenomas (at protein level).

It is found in the secreted. It carries out the reaction Cleavage of proteins with aromatic side chains in the P1 position.. With respect to regulation, inhibited by Zn2+ and Cu2+ at low micromolar concentrations. Inhibited by SERPINA12. Its function is as follows. May catalyze the degradation of intercellular cohesive structures in the cornified layer of the skin in the continuous shedding of cells from the skin surface. Specific for amino acid residues with aromatic side chains in the P1 position. Cleaves insulin A chain at '14-Tyr-|-Gln-15' and insulin B chain at '6-Leu-|-Cys-7', '16-Tyr-|-Leu-17', '25-Phe-|-Tyr-26' and '26-Tyr-|-Thr-27'. Could play a role in the activation of precursors to inflammatory cytokines. This Homo sapiens (Human) protein is Kallikrein-7 (KLK7).